A 673-amino-acid chain; its full sequence is F420-dependent formate dehydrogenase subunit alpha (673 aa).

The 4Fe-4S Mo/W bis-MGD-type domain occupies 3 to 59 (FKIVNTICPYCGVGCGLGLVVKDGRVIGIHPNKRHPINEGKLCAKGNYCYQFIHSKD). Residues cysteine 10, cysteine 13, cysteine 17, and cysteine 45 each coordinate [4Fe-4S] cluster. A non-standard amino acid (selenocysteine) is located at residue selenocysteine 131.

Belongs to the prokaryotic molybdopterin-containing oxidoreductase family. As to quaternary structure, dimer of an alpha (FdhA) and a beta (FdhB) subunit. [4Fe-4S] cluster serves as cofactor. It depends on Mo-bis(molybdopterin guanine dinucleotide) as a cofactor. Zn(2+) is required as a cofactor.

The enzyme catalyses oxidized coenzyme F420-(gamma-L-Glu)(n) + formate + 2 H(+) = reduced coenzyme F420-(gamma-L-Glu)(n) + CO2. Catalyzes the oxidation of formate to carbon dioxide, with coenzyme F420 as the electron acceptor. The protein is F420-dependent formate dehydrogenase subunit alpha (fdhA) of Methanocaldococcus jannaschii (strain ATCC 43067 / DSM 2661 / JAL-1 / JCM 10045 / NBRC 100440) (Methanococcus jannaschii).